The primary structure comprises 213 residues: Orotate phosphoribosyltransferase (213 aa).

Lys26 contributes to the 5-phospho-alpha-D-ribose 1-diphosphate binding site. 34–35 contributes to the orotate binding site; it reads FF. Residues 72 to 73, Arg99, Lys100, Lys103, His105, and 124 to 132 each bind 5-phospho-alpha-D-ribose 1-diphosphate; these read YK and DDVITAGTA. Orotate contacts are provided by Thr128 and Arg156.

The protein belongs to the purine/pyrimidine phosphoribosyltransferase family. PyrE subfamily. As to quaternary structure, homodimer. Mg(2+) serves as cofactor.

The enzyme catalyses orotidine 5'-phosphate + diphosphate = orotate + 5-phospho-alpha-D-ribose 1-diphosphate. The protein operates within pyrimidine metabolism; UMP biosynthesis via de novo pathway; UMP from orotate: step 1/2. Catalyzes the transfer of a ribosyl phosphate group from 5-phosphoribose 1-diphosphate to orotate, leading to the formation of orotidine monophosphate (OMP). The chain is Orotate phosphoribosyltransferase from Salmonella agona (strain SL483).